We begin with the raw amino-acid sequence, 342 residues long: Paired box protein Pax-9 (342 aa).

The paired DNA-binding region spans Ala4–Lys130. The PAI subdomain stretch occupies residues Glu7–Thr63. The segment at Thr82–Lys130 is RED subdomain. An interaction with KDM5B region spans residues Ala168–Pro189.

Interacts with KDM5B.

The protein resides in the nucleus. Functionally, transcription factor required for normal development of thymus, parathyroid glands, ultimobranchial bodies, teeth, skeletal elements of skull and larynx as well as distal limbs. The polypeptide is Paired box protein Pax-9 (Rattus norvegicus (Rat)).